A 207-amino-acid chain; its full sequence is Protein 6b (207 aa).

The segment at 160 to 183 (GNYTEEGEDDDDEMDDEGEAGGAE) is disordered. Residues 164-178 (EEGEDDDDEMDDEGE) show a composition bias toward acidic residues.

In terms of biological role, involved in tumor formation and increases auxin and cytokinin effects in host plants. In Agrobacterium tumefaciens (strain Ach5), this protein is Protein 6b (6b).